Here is a 628-residue protein sequence, read N- to C-terminus: Probable potassium transport system protein Kup (628 aa).

Transmembrane regions (helical) follow at residues 15 to 35 (FAAEIGALGVVFGDIGTSPLY), 49 to 69 (FLGGDVLGLLSLITWSIILSV), 106 to 126 (WYLLAAGLLGAAMLIGDGVLT), 141 to 161 (ISPELEHWVVTLTVLVLLAVF), 174 to 194 (FFGPIMLMWFGSLGALGVYGI), 210 to 230 (IMLMVNHPGLAGVILGACFLA), 254 to 274 (LFVAMPALLLNYFGQGAILLV), 295 to 315 (LLFLATAATVIASQSIITGVF), 343 to 363 (IYVGRLNWLLMIACIAVVLGF), 369 to 389 (LASAYGIAVAFAMVTTSILFI), 398 to 418 (WPAPAVWAMATGLLTIDFAFA), and 425 to 445 (IHDGGWLPLSIAAAIIFVMVS).

It belongs to the HAK/KUP transporter (TC 2.A.72) family.

Its subcellular location is the cell inner membrane. It carries out the reaction K(+)(in) + H(+)(in) = K(+)(out) + H(+)(out). Transport of potassium into the cell. Likely operates as a K(+):H(+) symporter. The chain is Probable potassium transport system protein Kup from Xanthobacter autotrophicus (strain ATCC BAA-1158 / Py2).